Reading from the N-terminus, the 505-residue chain is Exodeoxyribonuclease 7 large subunit (505 aa).

The interval 466-505 (SGDRDAVIDGEGGPAPAPTAPAPKPRPKPAAPPAGQGDLF) is disordered. Residues 480-497 (APAPTAPAPKPRPKPAAP) are compositionally biased toward pro residues.

This sequence belongs to the XseA family. As to quaternary structure, heterooligomer composed of large and small subunits.

The protein localises to the cytoplasm. It catalyses the reaction Exonucleolytic cleavage in either 5'- to 3'- or 3'- to 5'-direction to yield nucleoside 5'-phosphates.. Its function is as follows. Bidirectionally degrades single-stranded DNA into large acid-insoluble oligonucleotides, which are then degraded further into small acid-soluble oligonucleotides. This Caulobacter vibrioides (strain NA1000 / CB15N) (Caulobacter crescentus) protein is Exodeoxyribonuclease 7 large subunit.